The primary structure comprises 94 residues: Co-chaperonin GroES (94 aa).

This sequence belongs to the GroES chaperonin family. As to quaternary structure, heptamer of 7 subunits arranged in a ring. Interacts with the chaperonin GroEL.

The protein resides in the cytoplasm. Its function is as follows. Together with the chaperonin GroEL, plays an essential role in assisting protein folding. The GroEL-GroES system forms a nano-cage that allows encapsulation of the non-native substrate proteins and provides a physical environment optimized to promote and accelerate protein folding. GroES binds to the apical surface of the GroEL ring, thereby capping the opening of the GroEL channel. The polypeptide is Co-chaperonin GroES (Lactiplantibacillus plantarum (strain ATCC BAA-793 / NCIMB 8826 / WCFS1) (Lactobacillus plantarum)).